The sequence spans 186 residues: dCTP deaminase (186 aa).

Residue 106–111 participates in dCTP binding; it reads KSTYAR. Glu-132 serves as the catalytic Proton donor/acceptor. Gln-151, Tyr-166, and Gln-176 together coordinate dCTP.

The protein belongs to the dCTP deaminase family. In terms of assembly, homotrimer.

It catalyses the reaction dCTP + H2O + H(+) = dUTP + NH4(+). It functions in the pathway pyrimidine metabolism; dUMP biosynthesis; dUMP from dCTP (dUTP route): step 1/2. Catalyzes the deamination of dCTP to dUTP. This is dCTP deaminase from Nautilia profundicola (strain ATCC BAA-1463 / DSM 18972 / AmH).